The primary structure comprises 602 residues: MSEHHSKRALSLDDLVNHDENDKSKLQKLADNESSVRSDDNRPGAIENIVNGNNSNSDLNSNGVIEEDTDTDDDVGGEFTFDNGITFDYDKQDRFSPEKKRIQARKKDTSKTTPSISNESPSNSKESSVPVDPLSSNISATDRKDSSEEKPDLTGPELVKEPDTNEYKRPSIQSITNAEDTTYNDHKAAGMEKTSNKHSLPNILSDSIDETVTEEHKPKTETEQTITEYQQENKQKDNVNESNSEETHDIKNDNMNQVEKIFQEKTSTLSKKNSVKKDLELLNEISASSKPNKYKNTPIWAQKWKPTVKALQNIDTNDFKIDNSILDIIPDDDLTKSVQDWVYATLYSIDPDLRPFIELEMKFGVLLESKSPDRVNPPVSSQAVYTDMDAHLTPNVDETVFKELSKYIQSLSEITENAGKFNVIEAQTKDAVYRVGTSTQRPRFLRMSSDVKTGRIGAFIEKRHISQLLIYSPKDSYDVKLSINLELPVPENDPPEKYQHQTPVSERTKERVSYIHNDSCTRFDITKVQNHNKGIKSNDVEITHEIELEINTPALIKAFDNIMTDSKEYATLIRTFLNNGTIVRRKLSSLSYEIFEGQKKIQ.

Residues M1–D249 form a disordered region. The span at L15 to R42 shows a compositional bias: basic and acidic residues. The span at N48–V64 shows a compositional bias: low complexity. Acidic residues predominate over residues I65–G76. Residues D88 to S110 are compositionally biased toward basic and acidic residues. The span at P114–S128 shows a compositional bias: low complexity. Residues T141–R169 are compositionally biased toward basic and acidic residues. Residues S171 to T181 are compositionally biased toward polar residues. Basic and acidic residues-rich tracts occupy residues T213 to T222 and Q231 to D249. The N6-GMP-lysine intermediate role is filled by K276.

Belongs to the fungal TPase family. Heterodimer. The mRNA-capping enzyme is composed of two separate chains alpha and beta, respectively a mRNA guanylyltransferase and an mRNA 5'-triphosphate monophosphatase. Mg(2+) is required as a cofactor.

Its subcellular location is the nucleus. The enzyme catalyses a 5'-end triphospho-ribonucleoside in mRNA + H2O = a 5'-end diphospho-ribonucleoside in mRNA + phosphate + H(+). First step of mRNA capping. Converts the 5'-triphosphate end of a nascent mRNA chain into a diphosphate end. The chain is mRNA-capping enzyme subunit beta (CET1) from Candida glabrata (strain ATCC 2001 / BCRC 20586 / JCM 3761 / NBRC 0622 / NRRL Y-65 / CBS 138) (Yeast).